A 239-amino-acid polypeptide reads, in one-letter code: Aspartate/glutamate leucyltransferase (239 aa).

It belongs to the R-transferase family. Bpt subfamily.

It is found in the cytoplasm. The catalysed reaction is N-terminal L-glutamyl-[protein] + L-leucyl-tRNA(Leu) = N-terminal L-leucyl-L-glutamyl-[protein] + tRNA(Leu) + H(+). It carries out the reaction N-terminal L-aspartyl-[protein] + L-leucyl-tRNA(Leu) = N-terminal L-leucyl-L-aspartyl-[protein] + tRNA(Leu) + H(+). Its function is as follows. Functions in the N-end rule pathway of protein degradation where it conjugates Leu from its aminoacyl-tRNA to the N-termini of proteins containing an N-terminal aspartate or glutamate. This is Aspartate/glutamate leucyltransferase from Campylobacter jejuni subsp. jejuni serotype O:23/36 (strain 81-176).